We begin with the raw amino-acid sequence, 274 residues long: Protein RecA (274 aa).

43-50 is an ATP binding site; sequence GPESSGKT.

It belongs to the RecA family.

Its subcellular location is the cytoplasm. Can catalyze the hydrolysis of ATP in the presence of single-stranded DNA, the ATP-dependent uptake of single-stranded DNA by duplex DNA, and the ATP-dependent hybridization of homologous single-stranded DNAs. It interacts with LexA causing its activation and leading to its autocatalytic cleavage. The sequence is that of Protein RecA from Neisseria polysaccharea.